The following is a 364-amino-acid chain: Serine/threonine-protein kinase ENV7 (364 aa).

S-palmitoyl cysteine attachment occurs at residues Cys13, Cys14, and Cys15. Positions 30–364 (YRIQRLLGEG…LLNLLQDLDT (335 aa)) constitute a Protein kinase domain. ATP is bound by residues 36–44 (LGEGGMSFV) and Lys69. The active-site Proton acceptor is the Asp215.

Belongs to the protein kinase superfamily. Ser/Thr protein kinase family.

The protein localises to the vacuole membrane. It catalyses the reaction L-seryl-[protein] + ATP = O-phospho-L-seryl-[protein] + ADP + H(+). It carries out the reaction L-threonyl-[protein] + ATP = O-phospho-L-threonyl-[protein] + ADP + H(+). Functionally, serine/threonine-protein kinase involved in vacuolar processing and morphology. This is Serine/threonine-protein kinase ENV7 (ENV7) from Saccharomyces cerevisiae (strain ATCC 204508 / S288c) (Baker's yeast).